Reading from the N-terminus, the 793-residue chain is Probable serine/threonine-protein kinase fnkA (793 aa).

One can recognise a Protein kinase domain in the interval 11 to 358 (WEILSQLGTG…IINLISHNFI (348 aa)). ATP is bound by residues 17 to 25 (LGTGAFGRV) and Lys46. Catalysis depends on Asp138, which acts as the Proton acceptor. FNIP repeat units follow at residues 403 to 444 (FNQT…FGAR), 470 to 514 (YNQP…ILGD), 515 to 557 (YDQK…LGYR), 558 to 601 (FNKA…LGYC), and 691 to 733 (FIRP…LGSR).

The protein belongs to the protein kinase superfamily. STE Ser/Thr protein kinase family. Requires Mg(2+) as cofactor.

It carries out the reaction L-seryl-[protein] + ATP = O-phospho-L-seryl-[protein] + ADP + H(+). The enzyme catalyses L-threonyl-[protein] + ATP = O-phospho-L-threonyl-[protein] + ADP + H(+). The polypeptide is Probable serine/threonine-protein kinase fnkA (Dictyostelium discoideum (Social amoeba)).